A 471-amino-acid polypeptide reads, in one-letter code: Putative ETHYLENE INSENSITIVE 3-like 4 protein (471 aa).

Residues 280–316 (DLKISEDQDDQESSGSKRKSESMEPSKSVYTCQNSSC) form a disordered region. Residues 304 to 316 (PSKSVYTCQNSSC) are compositionally biased toward polar residues.

This sequence belongs to the EIN3 family.

The protein localises to the nucleus. In terms of biological role, putative transcription factor that may be involved in the ethylene response pathway. The sequence is that of Putative ETHYLENE INSENSITIVE 3-like 4 protein (EIL4) from Arabidopsis thaliana (Mouse-ear cress).